The following is a 219-amino-acid chain: Ribose-5-phosphate isomerase A (219 aa).

Substrate is bound by residues 28–31 (SGST), 81–84 (DGAD), and 94–97 (KGGG). The active-site Proton acceptor is the glutamate 103. Lysine 121 serves as a coordination point for substrate.

The protein belongs to the ribose 5-phosphate isomerase family. In terms of assembly, homodimer.

The catalysed reaction is aldehydo-D-ribose 5-phosphate = D-ribulose 5-phosphate. The protein operates within carbohydrate degradation; pentose phosphate pathway; D-ribose 5-phosphate from D-ribulose 5-phosphate (non-oxidative stage): step 1/1. Its function is as follows. Catalyzes the reversible conversion of ribose-5-phosphate to ribulose 5-phosphate. The polypeptide is Ribose-5-phosphate isomerase A (Histophilus somni (strain 129Pt) (Haemophilus somnus)).